The primary structure comprises 314 residues: Olfactory receptor 5P76 (314 aa).

Topologically, residues 1–28 (MAFLEDGNHTAVTGFILLGLTDDPVLRV) are extracellular. The N-linked (GlcNAc...) asparagine glycan is linked to N8. Residues 29–49 (VLFVIILCIYLVTVSGNLSTI) traverse the membrane as a helical segment. Residues 50 to 57 (LLIRVSSQ) are Cytoplasmic-facing. Residues 58–78 (LHHPMYFFLSHLASADIGYSS) traverse the membrane as a helical segment. Residues 79 to 102 (SVTPNMLVNFLVERNTISYLGCGI) are Extracellular-facing. A disulfide bond links C100 and C192. A helical membrane pass occupies residues 103 to 123 (QLGSAVFFGTVECFLLAAMAY). Residues 124-136 (DRFIAICSPLLYS) are Cytoplasmic-facing. The helical transmembrane segment at 137–157 (NKMSTQVCVQLLVGSYIGGFL) threads the bilayer. The Extracellular segment spans residues 158 to 199 (NASSFTLSFFSLVFCGPNRVNHFFCDFAPLVKLSCSDVSVPA). The chain crosses the membrane as a helical span at residues 200 to 220 (VVPSFTAGSIIIVTIFVIAVS). Topologically, residues 221–240 (YIYILITILKMRSTEGRQKA) are cytoplasmic. A helical transmembrane segment spans residues 241 to 261 (FSTCTSHLTAVTLFYGTITFI). At 262-274 (YVMPKSSYSTDQN) the chain is on the extracellular side. The helical transmembrane segment at 275 to 295 (KVVSVFYMVVVPMLNPLIYSL) threads the bilayer. The Cytoplasmic segment spans residues 296-314 (RNKEIKGALKRQLAKNTFS).

Belongs to the G-protein coupled receptor 1 family.

The protein resides in the cell membrane. Its function is as follows. Potential odorant receptor. This is Olfactory receptor 5P76 from Mus musculus (Mouse).